We begin with the raw amino-acid sequence, 184 residues long: ATP synthase subunit b, chloroplastic (184 aa).

A helical membrane pass occupies residues 27-49; the sequence is LATNPINLSVVLGVLIFFGKGVL.

The protein belongs to the ATPase B chain family. As to quaternary structure, F-type ATPases have 2 components, F(1) - the catalytic core - and F(0) - the membrane proton channel. F(1) has five subunits: alpha(3), beta(3), gamma(1), delta(1), epsilon(1). F(0) has four main subunits: a(1), b(1), b'(1) and c(10-14). The alpha and beta chains form an alternating ring which encloses part of the gamma chain. F(1) is attached to F(0) by a central stalk formed by the gamma and epsilon chains, while a peripheral stalk is formed by the delta, b and b' chains.

It localises to the plastid. The protein localises to the chloroplast thylakoid membrane. Functionally, f(1)F(0) ATP synthase produces ATP from ADP in the presence of a proton or sodium gradient. F-type ATPases consist of two structural domains, F(1) containing the extramembraneous catalytic core and F(0) containing the membrane proton channel, linked together by a central stalk and a peripheral stalk. During catalysis, ATP synthesis in the catalytic domain of F(1) is coupled via a rotary mechanism of the central stalk subunits to proton translocation. In terms of biological role, component of the F(0) channel, it forms part of the peripheral stalk, linking F(1) to F(0). The sequence is that of ATP synthase subunit b, chloroplastic from Morus indica (Mulberry).